The sequence spans 149 residues: FAD synthase (149 aa).

Residues 10 to 11 (TF), 15 to 18 (HPGH), Asp-95, and Tyr-123 contribute to the ATP site.

It belongs to the archaeal FAD synthase family. In terms of assembly, homodimer. It depends on Co(2+) as a cofactor.

The catalysed reaction is FMN + ATP + H(+) = FAD + diphosphate. It participates in cofactor biosynthesis; FAD biosynthesis; FAD from FMN: step 1/1. Is inhibited by the product PPi. In terms of biological role, catalyzes the transfer of the AMP portion of ATP to flavin mononucleotide (FMN) to produce flavin adenine dinucleotide (FAD) coenzyme. To a lesser extent, is also able to utilize other nucleotides such as CTP and GTP as substrates, producing the modified coenzymes, flavin cytosine dinucleotide (FCD) and flavin guanine dinucleotide (FGD), respectively. Does not catalyze the reverse reaction to produce FMN and ATP from FAD and PPi. Does not function as a glycerol-3-phosphate cytidylyltransferase, as previously annotated in the complete genome. This Methanocaldococcus jannaschii (strain ATCC 43067 / DSM 2661 / JAL-1 / JCM 10045 / NBRC 100440) (Methanococcus jannaschii) protein is FAD synthase (ribL).